A 211-amino-acid polypeptide reads, in one-letter code: Vascular-related unknown protein 1 (211 aa).

Residues 1–12 (MMDTFSCNSYEQ) are compositionally biased toward polar residues. The tract at residues 1-40 (MMDTFSCNSYEQNHPHDDDIDIDAHDHDSHGGDHQEESGW) is disordered. Residues 13–37 (NHPHDDDIDIDAHDHDSHGGDHQEE) are compositionally biased toward basic and acidic residues.

Expressed in vascular tissues of cotyledons, rosette leaves, sepals, petals, anther filaments. Expressed in roots, inflorescence stems and developing seeds.

The protein resides in the cytoplasm. The protein localises to the nucleus. Functionally, involved in the regulation of xylem development and growth. May regulate secondary wall formation during vascular development by modulation of brassinosteroid, gibberellin and auxin hormone signaling pathways. This is Vascular-related unknown protein 1 from Arabidopsis thaliana (Mouse-ear cress).